A 130-amino-acid polypeptide reads, in one-letter code: Gloverin (130 aa).

As to expression, hemolymph.

It localises to the secreted. Its function is as follows. Antibacterial protein active against Gram-negative bacteria. The polypeptide is Gloverin (Hyalophora cecropia (Cecropia moth)).